The sequence spans 592 residues: Probable 6-phosphofructo-2-kinase C222.13c (592 aa).

The tract at residues Met-1–Val-80 is disordered. Positions Ser-57 to Pro-66 are enriched in basic and acidic residues. An ATP-binding site is contributed by Gly-150–Ser-157. Catalysis depends on residues Asp-235 and Cys-266. Arg-300 is a binding site for beta-D-fructose 6-phosphate. The active-site Proton donor is His-527.

The protein resides in the cytoplasm. The protein localises to the nucleus. It catalyses the reaction beta-D-fructose 6-phosphate + ATP = beta-D-fructose 2,6-bisphosphate + ADP + H(+). Its function is as follows. Synthesis of fructose 2,6-bisphosphate. The protein is Probable 6-phosphofructo-2-kinase C222.13c of Schizosaccharomyces pombe (strain 972 / ATCC 24843) (Fission yeast).